Consider the following 555-residue polypeptide: Urocanate hydratase (555 aa).

NAD(+) is bound by residues Gly51–Gly52, Gln129, Gly175–Gly177, Glu195, Gln262–His266, Tyr272–Leu273, and Tyr321. Cys409 is an active-site residue. Gly491 is a binding site for NAD(+).

The protein belongs to the urocanase family. The cofactor is NAD(+).

It localises to the cytoplasm. The enzyme catalyses 4-imidazolone-5-propanoate = trans-urocanate + H2O. It participates in amino-acid degradation; L-histidine degradation into L-glutamate; N-formimidoyl-L-glutamate from L-histidine: step 2/3. In terms of biological role, catalyzes the conversion of urocanate to 4-imidazolone-5-propionate. In Xanthomonas campestris pv. campestris (strain ATCC 33913 / DSM 3586 / NCPPB 528 / LMG 568 / P 25), this protein is Urocanate hydratase.